The sequence spans 435 residues: 3-phosphoshikimate 1-carboxyvinyltransferase (435 aa).

Residues Lys23, Ser24, and Arg28 each coordinate 3-phosphoshikimate. Lys23 lines the phosphoenolpyruvate pocket. 2 residues coordinate phosphoenolpyruvate: Gly96 and Arg124. Residues Ser167, Ser168, Gln169, Ser196, Glu311, and His340 each coordinate 3-phosphoshikimate. Gln169 is a binding site for phosphoenolpyruvate. The Proton acceptor role is filled by Glu311. The phosphoenolpyruvate site is built by Arg344, Arg385, and Lys410.

It belongs to the EPSP synthase family. In terms of assembly, monomer.

It is found in the cytoplasm. It carries out the reaction 3-phosphoshikimate + phosphoenolpyruvate = 5-O-(1-carboxyvinyl)-3-phosphoshikimate + phosphate. The protein operates within metabolic intermediate biosynthesis; chorismate biosynthesis; chorismate from D-erythrose 4-phosphate and phosphoenolpyruvate: step 6/7. Its function is as follows. Catalyzes the transfer of the enolpyruvyl moiety of phosphoenolpyruvate (PEP) to the 5-hydroxyl of shikimate-3-phosphate (S3P) to produce enolpyruvyl shikimate-3-phosphate and inorganic phosphate. In Mycolicibacterium paratuberculosis (strain ATCC BAA-968 / K-10) (Mycobacterium paratuberculosis), this protein is 3-phosphoshikimate 1-carboxyvinyltransferase.